The primary structure comprises 121 residues: Large ribosomal subunit protein bL19 (121 aa).

The protein belongs to the bacterial ribosomal protein bL19 family.

Its function is as follows. This protein is located at the 30S-50S ribosomal subunit interface and may play a role in the structure and function of the aminoacyl-tRNA binding site. The protein is Large ribosomal subunit protein bL19 (rplS) of Chlamydia muridarum (strain MoPn / Nigg).